Consider the following 338-residue polypeptide: DNA-directed RNA polymerase subunit alpha (338 aa).

The alpha N-terminal domain (alpha-NTD) stretch occupies residues 1-226 (MLIAQRPSLT…ELFGLARELN (226 aa)). The tract at residues 243-338 (LAADLVMPIE…DAGFLETEHY (96 aa)) is alpha C-terminal domain (alpha-CTD).

This sequence belongs to the RNA polymerase alpha chain family. As to quaternary structure, homodimer. The RNAP catalytic core consists of 2 alpha, 1 beta, 1 beta' and 1 omega subunit. When a sigma factor is associated with the core the holoenzyme is formed, which can initiate transcription.

It catalyses the reaction RNA(n) + a ribonucleoside 5'-triphosphate = RNA(n+1) + diphosphate. In terms of biological role, DNA-dependent RNA polymerase catalyzes the transcription of DNA into RNA using the four ribonucleoside triphosphates as substrates. The chain is DNA-directed RNA polymerase subunit alpha from Streptomyces avermitilis (strain ATCC 31267 / DSM 46492 / JCM 5070 / NBRC 14893 / NCIMB 12804 / NRRL 8165 / MA-4680).